Reading from the N-terminus, the 759-residue chain is LPS-assembly protein LptD (759 aa).

A signal peptide spans 1–22; it reads MPLPIPRLLIPALLLASGASLA.

Belongs to the LptD family. Component of the lipopolysaccharide transport and assembly complex. Interacts with LptE and LptA.

It is found in the cell outer membrane. Its function is as follows. Together with LptE, is involved in the assembly of lipopolysaccharide (LPS) at the surface of the outer membrane. This chain is LPS-assembly protein LptD, found in Alcanivorax borkumensis (strain ATCC 700651 / DSM 11573 / NCIMB 13689 / SK2).